We begin with the raw amino-acid sequence, 494 residues long: MRIEMKNISKAFNGNPVLKNAQFMIETGEVHALMGENGAGKSTLMKILTGVYKRDGGTITIDGQERTFKNAKEAEEYGIAFIHQELNILPNLTVAENMFLGKELMYGKTGILRTRQMNAIAQQQLAELGLHVKGAMLAGELSVGQQQIIEIAKALMTNASVIIMDEPTAALTDREIETLFTVINKLRKEGVSFVYISHRMEEIFSICDAITILRDGEYVGKRSIPETSFDEVVSMMVGRSIGERYPERNSQISDVIFEMRNGTKKGKFENVSFQVRKGEILGVAGLMGAGRTDIMKSIFGYEPLDSGQIFINGQEVKIDSPIDAIRQRIAFITEDRKSEGLVLDFSIRENLALPNLESLSKGSVLSNELEQQFTADMMKLLNVKASSGEQAVKSLSGGNQQKVVIAKWLGIHPQLLILDEPTRGVDVGAKKEIYSIMNKLTEEGDAVIMVSSELPEVLGMSDRVLVIHEGKVGGILEKDEASQESIMALATGGE.

2 ABC transporter domains span residues 3-240 (IEMK…VGRS) and 250-494 (SQIS…TGGE). 35-42 (GENGAGKS) is a binding site for ATP.

This sequence belongs to the ABC transporter superfamily. Ribose importer (TC 3.A.1.2.1) family. In terms of assembly, the complex is composed of an ATP-binding protein (RbsA), two transmembrane proteins (RbsC) and a solute-binding protein (RbsB).

It is found in the cell membrane. The enzyme catalyses D-ribose(out) + ATP + H2O = D-ribose(in) + ADP + phosphate + H(+). In terms of biological role, part of the ABC transporter complex RbsABC involved in ribose import. Responsible for energy coupling to the transport system. This is Ribose import ATP-binding protein RbsA from Bacillus cereus (strain ZK / E33L).